The primary structure comprises 613 residues: Forkhead box protein O (613 aa).

4 disordered regions span residues 39–90 (RARS…KNSS), 182–205 (KSVR…RAKK), 217–269 (GLND…RLSP), and 317–360 (QGFS…PASG). Position 44 is a phosphothreonine; by PKB/AKT1 (Thr-44). The segment covering 63–80 (TKASNQQLAPGDSQQAIQ) has biased composition (polar residues). The residue at position 75 (Ser-75) is a Phosphoserine. A compositionally biased stretch (low complexity) spans 81–90 (NANAAKKNSS). The fork-head DNA-binding region spans 95–201 (WGNLSYADLI…ETSRYEKRRG (107 aa)). A Phosphoserine; by PKB/AKT1 modification is found at Ser-190. 2 stretches are compositionally biased toward polar residues: residues 221-230 (ATPSPSSSVS) and 256-265 (RASSNASSCG). Ser-259 carries the post-translational modification Phosphoserine; by PKB/AKT1. Phosphoserine occurs at positions 262, 263, and 268. The span at 327-336 (SQPPPPPYQP) shows a compositional bias: pro residues. A compositionally biased stretch (low complexity) spans 337–353 (PQHQQAQQQQQQQSPYA).

Interacts with melt.

Its subcellular location is the cytoplasm. It localises to the nucleus. Its function is as follows. Transcription factor involved in the regulation of the insulin signaling pathway. Consistently activates both the downstream target Thor\d4EBP and the feedback control target InR. Involved in negative regulation of the cell cycle, modulating cell growth and proliferation. In response to cellular stresses, such as nutrient deprivation or increased levels of reactive oxygen species, foxo is activated and inhibits growth through the action of target genes such as Thor. Foxo activated in the adult fat body can regulate lifespan in adults; an insulin peptide itself may function as one secondary messenger of insulin-regulated aging. Also regulates Lip4, homolog of human acid lipases, thereby acting as a key modulator of lipid metabolism by insulin signaling and integrates insulin responses to glucose and lipid homeostasis. The polypeptide is Forkhead box protein O (Drosophila melanogaster (Fruit fly)).